Reading from the N-terminus, the 300-residue chain is Arrestin domain-containing protein 4 (300 aa).

2 short sequence motifs (PPxY motif) span residues 231-234 (PPNY) and 276-279 (PPLY).

Belongs to the arrestin family. In terms of assembly, interacts with ADRB2. Interacts (via PPxY motifs) with ITCH, NEDD4L and WWP2. Interacts with AVPR2. Identified in a complex containing at least ARRDC4, AVPR2 and HGS. Interacts with SLC11A2; controls the incorporation of SLC11A2 into extracellular vesicles through an ubiquitination-dependent mechanism. Interacts with TRIM65.

Its subcellular location is the early endosome. It is found in the cell membrane. The protein resides in the cytoplasmic vesicle. Functions as an adapter recruiting ubiquitin-protein ligases to their specific substrates. Plays a role in endocytosis of activated G protein-coupled receptors (GPCRs) Through an ubiquitination-dependent mechanism also plays a role in the incorporation of SLC11A2 into extracellular vesicles. May play a role in glucose uptake. Participates in innate immune response by promoting IFIH1/MDA5 activation through interaction with TRIM65. In Rattus norvegicus (Rat), this protein is Arrestin domain-containing protein 4 (Arrdc4).